Reading from the N-terminus, the 309-residue chain is Homoserine kinase (309 aa).

An ATP-binding site is contributed by 91–101; sequence PIGSGLGSSAC.

The protein belongs to the GHMP kinase family. Homoserine kinase subfamily.

Its subcellular location is the cytoplasm. It catalyses the reaction L-homoserine + ATP = O-phospho-L-homoserine + ADP + H(+). Its pathway is amino-acid biosynthesis; L-threonine biosynthesis; L-threonine from L-aspartate: step 4/5. Its function is as follows. Catalyzes the ATP-dependent phosphorylation of L-homoserine to L-homoserine phosphate. In Photorhabdus laumondii subsp. laumondii (strain DSM 15139 / CIP 105565 / TT01) (Photorhabdus luminescens subsp. laumondii), this protein is Homoserine kinase.